A 686-amino-acid chain; its full sequence is Aminodeoxychorismate synthase (686 aa).

Residues 2-194 form the Glutamine amidotransferase type-1 domain; the sequence is RTLLIDNYDS…RDLALAHHRA (193 aa). Cys81 serves as the catalytic Nucleophile. Residues His168 and Glu170 contribute to the active site. A PABB component region spans residues 233–686; it reads LDSSSVLEGA…LDGSAVAGAR (454 aa).

This sequence in the C-terminal section; belongs to the anthranilate synthase component I family.

It carries out the reaction chorismate + L-glutamine = 4-amino-4-deoxychorismate + L-glutamate. It participates in antibiotic biosynthesis. In terms of biological role, involved in chloramphenicol biosynthesis. Catalyzes the biosynthesis of 4-amino-4-deoxychorismate (ADC) from chorismate and glutamine. The chain is Aminodeoxychorismate synthase from Streptomyces venezuelae (strain ATCC 10712 / CBS 650.69 / DSM 40230 / JCM 4526 / NBRC 13096 / PD 04745).